The following is a 1188-amino-acid chain: Adenomatous polyposis coli protein-related protein 1 (1188 aa).

A disordered region spans residues 1–50 (MSSSSSDENETTIHRTGSNTGGSGIYSQPRAGSSKRTSNVRHDVSDVDDE). A required for interaction with bar-1 and hmp-2 region spans residues 1–486 (MSSSSSDENE…LSLRATRASP (486 aa)). Residues 314-358 (NCLKVLASLLSPDARFTSLVDSATGILKYVSQYLANTSTHLELRS) form an ARM repeat. Residues 579 to 588 (IQQQQQMQKA) are compositionally biased toward low complexity. Disordered regions lie at residues 579–624 (IQQQ…SMNP), 670–702 (TESE…DGAT), 726–751 (TPNG…GPSL), 778–952 (QSEM…TMRF), 1003–1092 (CSMI…LKDK), and 1157–1181 (YQKP…PNPK). The required for interaction with pry-1 stretch occupies residues 600–1188 (DLDIPTSTVM…NPKQMLVTIV (589 aa)). Composition is skewed to polar residues over residues 604–624 (PTST…SMNP) and 677–701 (LTSQ…SDGA). 2 stretches are compositionally biased toward polar residues: residues 778-788 (QSEMPTSSSTP) and 800-811 (FSPTQKTTSSPA). Composition is skewed to basic and acidic residues over residues 832 to 843 (RRQDASDADRLL) and 871 to 900 (EPER…DHNG). Composition is skewed to polar residues over residues 909-929 (WSPQ…SSED), 937-946 (EPNSSTSGAA), 1014-1039 (QRNE…SASS), and 1164-1180 (GRNN…TPNP).

It belongs to the adenomatous polyposis coli (APC) family. In terms of assembly, interacts (via N-terminus) with bar-1 and hmp-2; the interaction with hmp-2 is relatively weak. Interacts (via C-terminus) with pry-1 (via N-terminus). Probably associates with bar-1, gsk-3, pry-1 in a complex. During the L1 stage, expressed in vulval precursor cells (P3-8.p), seam cells and excretory cells.

It is found in the cell junction. The protein localises to the adherens junction. The protein resides in the cytoplasm. Its subcellular location is the nucleus. In terms of biological role, has a role in endoderm cell specification and pharyngeal development. Required for the migration of epithelial cells, organization of the anterior seam cells and ceh-13 expression during embryo morphogenesis. Prevents hyperactivation of the Wnt signaling pathway during endoderm development, probably by preventing hmp-2 nuclear translocation. During larval development, apr-1 is required for expression of lin-39 in P3-8.p. Shown to negatively regulate Wnt signaling in vulval precursor cells. Has a role in cell division by establishing the polarity of the mother cell which forms the asymmetries of the daughter nuclei. During the L4 larval stage, it is required for the asymmetric division and self-renewal of seam cells. Thought to regulate export of wrm-1 from the nucleus possibly as part of a complex involving pry-1. The polypeptide is Adenomatous polyposis coli protein-related protein 1 (Caenorhabditis elegans).